Consider the following 445-residue polypeptide: Probable protein phosphatase 2C 14 (445 aa).

In terms of domain architecture, PPM-type phosphatase spans 120–440 (GFGVVSRNGK…DDITVVIIDL (321 aa)). Residues Asp156, Gly157, and Asp318 each coordinate Mn(2+). Positions 384-404 (NSENESPSLNREIGSSPSKSP) are disordered. Positions 390 to 404 (PSLNREIGSSPSKSP) are enriched in polar residues. Asp431 contacts Mn(2+).

This sequence belongs to the PP2C family. Mg(2+) is required as a cofactor. The cofactor is Mn(2+).

The catalysed reaction is O-phospho-L-seryl-[protein] + H2O = L-seryl-[protein] + phosphate. It catalyses the reaction O-phospho-L-threonyl-[protein] + H2O = L-threonyl-[protein] + phosphate. The chain is Probable protein phosphatase 2C 14 from Arabidopsis thaliana (Mouse-ear cress).